The primary structure comprises 554 residues: CTP synthase (554 aa).

Residues 1–265 (MTPLIFVTGG…DELVIDQFKL (265 aa)) form an amidoligase domain region. CTP is bound at residue S13. S13 is a binding site for UTP. ATP contacts are provided by residues 14-19 (SLGKGI) and D71. Residues D71 and E139 each contribute to the Mg(2+) site. Residues 146–148 (DIE), 186–191 (KTKPTQ), and K222 contribute to the CTP site. UTP contacts are provided by residues 186–191 (KTKPTQ) and K222. The Glutamine amidotransferase type-1 domain maps to 292-545 (NIAVVGKYVD…VRAAREKKAG (254 aa)). G353 is an L-glutamine binding site. C380 serves as the catalytic Nucleophile; for glutamine hydrolysis. Residues 381–384 (YGMQ), E404, and R471 each bind L-glutamine. Residues H518 and E520 contribute to the active site.

This sequence belongs to the CTP synthase family. Homotetramer.

It carries out the reaction UTP + L-glutamine + ATP + H2O = CTP + L-glutamate + ADP + phosphate + 2 H(+). It catalyses the reaction L-glutamine + H2O = L-glutamate + NH4(+). The enzyme catalyses UTP + NH4(+) + ATP = CTP + ADP + phosphate + 2 H(+). It participates in pyrimidine metabolism; CTP biosynthesis via de novo pathway; CTP from UDP: step 2/2. With respect to regulation, allosterically activated by GTP, when glutamine is the substrate; GTP has no effect on the reaction when ammonia is the substrate. The allosteric effector GTP functions by stabilizing the protein conformation that binds the tetrahedral intermediate(s) formed during glutamine hydrolysis. Inhibited by the product CTP, via allosteric rather than competitive inhibition. Catalyzes the ATP-dependent amination of UTP to CTP with either L-glutamine or ammonia as the source of nitrogen. Regulates intracellular CTP levels through interactions with the four ribonucleotide triphosphates. The chain is CTP synthase from Xanthomonas axonopodis pv. citri (strain 306).